Reading from the N-terminus, the 732-residue chain is Glycine--tRNA ligase (732 aa).

A mitochondrion-targeting transit peptide spans 1–27; that stretch reads MRHVLSLVYKCSVFSKQVTVFSNHLRL. Positions 61-117 constitute a WHEP-TRS domain; that stretch reads ILAPLRANVKEQGDLVRKLKEEKAPEIDIKKAVAELKTRKKILEDKELSLAPAEDLF. Residue glutamate 297 participates in glycine binding. ATP is bound by residues 329–331 and 340–341; these read RNE and RV. Glutamate 348 serves as a coordination point for glycine. 453–454 is a binding site for ATP; sequence EC. Position 572-574 (572-574) interacts with glycine; it reads EPS. Arginine 579 lines the ATP pocket.

The protein belongs to the class-II aminoacyl-tRNA synthetase family. In terms of assembly, homodimer.

It is found in the mitochondrion. It localises to the cytoplasm. The protein resides in the cell projection. Its subcellular location is the axon. The catalysed reaction is tRNA(Gly) + glycine + ATP = glycyl-tRNA(Gly) + AMP + diphosphate. The enzyme catalyses 2 ATP + H(+) = P(1),P(4)-bis(5'-adenosyl) tetraphosphate + diphosphate. Its function is as follows. Catalyzes the ATP-dependent ligation of glycine to the 3'-end of its cognate tRNA, via the formation of an aminoacyl-adenylate intermediate (Gly-AMP). Also produces diadenosine tetraphosphate (Ap4A), a universal pleiotropic signaling molecule needed for cell regulation pathways, by direct condensation of 2 ATPs. Thereby, may play a special role in Ap4A homeostasis. Required for terminal arborization of both dendrites and axons during development. The sequence is that of Glycine--tRNA ligase from Bombyx mori (Silk moth).